Reading from the N-terminus, the 273-residue chain is DNA repair protein RecO (273 aa).

The protein belongs to the RecO family.

In terms of biological role, involved in DNA repair and RecF pathway recombination. The sequence is that of DNA repair protein RecO from Saccharopolyspora erythraea (strain ATCC 11635 / DSM 40517 / JCM 4748 / NBRC 13426 / NCIMB 8594 / NRRL 2338).